The primary structure comprises 104 residues: Large ribosomal subunit protein uL24 (104 aa).

Belongs to the universal ribosomal protein uL24 family. In terms of assembly, part of the 50S ribosomal subunit.

One of two assembly initiator proteins, it binds directly to the 5'-end of the 23S rRNA, where it nucleates assembly of the 50S subunit. Its function is as follows. One of the proteins that surrounds the polypeptide exit tunnel on the outside of the subunit. The sequence is that of Large ribosomal subunit protein uL24 from Pseudoalteromonas translucida (strain TAC 125).